Consider the following 408-residue polypeptide: LL-diaminopimelate aminotransferase (408 aa).

Residues Y15 and G42 each coordinate substrate. Residues Y72, 108–109, Y132, N187, Y218, and 246–248 contribute to the pyridoxal 5'-phosphate site; these read SK and SFS. K109, Y132, and N187 together coordinate substrate. K249 carries the post-translational modification N6-(pyridoxal phosphate)lysine. R257 and N292 together coordinate pyridoxal 5'-phosphate. Residues N292 and R388 each contribute to the substrate site.

The protein belongs to the class-I pyridoxal-phosphate-dependent aminotransferase family. LL-diaminopimelate aminotransferase subfamily. Homodimer. Pyridoxal 5'-phosphate is required as a cofactor.

The enzyme catalyses (2S,6S)-2,6-diaminopimelate + 2-oxoglutarate = (S)-2,3,4,5-tetrahydrodipicolinate + L-glutamate + H2O + H(+). It functions in the pathway amino-acid biosynthesis; L-lysine biosynthesis via DAP pathway; LL-2,6-diaminopimelate from (S)-tetrahydrodipicolinate (aminotransferase route): step 1/1. In terms of biological role, involved in the synthesis of meso-diaminopimelate (m-DAP or DL-DAP), required for both lysine and peptidoglycan biosynthesis. Catalyzes the direct conversion of tetrahydrodipicolinate to LL-diaminopimelate. This Synechococcus sp. (strain CC9902) protein is LL-diaminopimelate aminotransferase.